The chain runs to 715 residues: ATP-dependent zinc metalloprotease YME1L1 (715 aa).

The disordered stretch occupies residues 31 to 54 (VSVNTSASPKQHRDTVAEHEAPSS). Over residues 41-52 (QHRDTVAEHEAP) the composition is skewed to basic and acidic residues. The helical transmembrane segment at 238-258 (ILFVLLLFGIYGLLKNPFLSV) threads the bilayer. Positions 283, 325, 326, 327, 328, and 329 each coordinate ATP. His541 is a Zn(2+) binding site. Glu542 is a catalytic residue. The Zn(2+) site is built by His545 and Asp619.

The protein in the N-terminal section; belongs to the AAA ATPase family. This sequence in the C-terminal section; belongs to the peptidase M41 family. In terms of assembly, homohexamer; may also form heterohexamers. Exists in several complexes of 600-1100 kDa. Interacts with AFG1L. It depends on Zn(2+) as a cofactor. In terms of processing, proteolytically processed by mitochondrial processing peptidase (MPP) to generate the mature form. Degraded in an OMA1-dependent manner in response to oxidative stress.

The protein localises to the mitochondrion inner membrane. Its subcellular location is the mitochondrion. The catalysed reaction is ATP + H2O = ADP + phosphate + H(+). Functionally, ATP-dependent metalloprotease that catalyzes the degradation of folded and unfolded proteins with a suitable degron sequence in the mitochondrial intermembrane region. Plays an important role in regulating mitochondrial morphology and function by cleaving OPA1 at position S2, giving rise to a form of OPA1 that promotes maintenance of normal mitochondrial structure and mitochondrial protein metabolism. Ensures cell proliferation, maintains normal cristae morphology and complex I respiration activity, promotes antiapoptotic activity and protects mitochondria from the accumulation of oxidatively damaged membrane proteins. Required to control the accumulation of nonassembled respiratory chain subunits (NDUFB6, OX4 and ND1). Involved in the mitochondrial adaptation in response to various signals, such as stress or developmental cues, by mediating degradation of mitochondrial proteins to rewire the mitochondrial proteome. Catalyzes degradation of mitochondrial proteins, such as translocases, lipid transfer proteins and metabolic enzymes in response to nutrient starvation in order to limit mitochondrial biogenesis: mechanistically, YME1L is activated by decreased phosphatidylethanolamine levels caused by LPIN1 activity in response to mTORC1 inhibition. Acts as a regulator of adult neural stem cell self-renewal by promoting mitochondrial proteome rewiring, preserving neural stem and progenitor cells self-renewal. Required for normal, constitutive degradation of PRELID1. Catalyzes the degradation of OMA1 in response to membrane depolarization. Mediates degradation of TIMM17A downstream of the integrated stress response (ISR). Catalyzes degradation of MICU1 when MICU1 is not assembled via an interchain disulfide. The chain is ATP-dependent zinc metalloprotease YME1L1 (Yme1l1) from Rattus norvegicus (Rat).